Consider the following 209-residue polypeptide: Ribosomal RNA large subunit methyltransferase E (209 aa).

Residues Gly63, Trp65, Asp83, Asp99, and Asp124 each contribute to the S-adenosyl-L-methionine site. Residue Lys164 is the Proton acceptor of the active site.

The protein belongs to the class I-like SAM-binding methyltransferase superfamily. RNA methyltransferase RlmE family.

It localises to the cytoplasm. The enzyme catalyses uridine(2552) in 23S rRNA + S-adenosyl-L-methionine = 2'-O-methyluridine(2552) in 23S rRNA + S-adenosyl-L-homocysteine + H(+). Functionally, specifically methylates the uridine in position 2552 of 23S rRNA at the 2'-O position of the ribose in the fully assembled 50S ribosomal subunit. The chain is Ribosomal RNA large subunit methyltransferase E from Pseudoalteromonas translucida (strain TAC 125).